The chain runs to 94 residues: Large ribosomal subunit protein bL25 (94 aa).

The protein belongs to the bacterial ribosomal protein bL25 family. As to quaternary structure, part of the 50S ribosomal subunit; part of the 5S rRNA/L5/L18/L25 subcomplex. Contacts the 5S rRNA. Binds to the 5S rRNA independently of L5 and L18.

This is one of the proteins that binds to the 5S RNA in the ribosome where it forms part of the central protuberance. The chain is Large ribosomal subunit protein bL25 from Proteus mirabilis (strain HI4320).